Here is a 919-residue protein sequence, read N- to C-terminus: MFS-type transporter clz9 (919 aa).

Over residues 1 to 11 (MAASTKPTTKL) the composition is skewed to polar residues. Positions 1-33 (MAASTKPTTKLSTEEDDVSRRDSESSADFMKSN) are disordered. The helical transmembrane segment at 69-89 (VVASFAAAISPFSTSTYYPVV) threads the bilayer. Residue N104 is glycosylated (N-linked (GlcNAc...) asparagine). 3 helical membrane passes run 132-152 (PMFL…ALQN), 192-212 (LIYA…IGGL), and 222-242 (VFWF…IFFG). N-linked (GlcNAc...) asparagine glycosylation occurs at N260. Transmembrane regions (helical) follow at residues 303 to 323 (FILS…TSVL), 333 to 353 (YDAV…LLAY), 393 to 413 (LGFV…YGWQ), and 418 to 438 (APLA…TGVM). A glycan (N-linked (GlcNAc...) asparagine) is linked at N461. The chain crosses the membrane as a helical span at residues 465–485 (LLLGAGAVAVVGPLNKSAGIG). In terms of domain architecture, DDE-1 spans 641–809 (REWVTLIQGI…FTSANICSSF (169 aa)). The tract at residues 840 to 897 (EAPWEAKTPSNRKKKQIQKRGTLTKGEGEDTLAQKEADQQIEREQRQGGEQSGRSRQA) is disordered. Residues 865 to 886 (GEGEDTLAQKEADQQIEREQRQ) are compositionally biased toward basic and acidic residues. Residues 887-896 (GGEQSGRSRQ) are compositionally biased toward low complexity. Residue N915 is glycosylated (N-linked (GlcNAc...) asparagine).

Belongs to the major facilitator superfamily. CAR1 family.

It localises to the membrane. MFS-type transporter; part of the gene cluster that mediates the biosynthesis of squalestatin S1 (SQS1, also known as zaragozic acid A), a heavily oxidized fungal polyketide that offers potent cholesterol lowering activity by targeting squalene synthase (SS). This chain is MFS-type transporter clz9, found in Cochliobolus lunatus (Filamentous fungus).